The following is an 873-amino-acid chain: Alanine--tRNA ligase (873 aa).

Positions 562, 566, 664, and 668 each coordinate Zn(2+).

It belongs to the class-II aminoacyl-tRNA synthetase family. Requires Zn(2+) as cofactor.

The protein localises to the cytoplasm. It carries out the reaction tRNA(Ala) + L-alanine + ATP = L-alanyl-tRNA(Ala) + AMP + diphosphate. Catalyzes the attachment of alanine to tRNA(Ala) in a two-step reaction: alanine is first activated by ATP to form Ala-AMP and then transferred to the acceptor end of tRNA(Ala). Also edits incorrectly charged Ser-tRNA(Ala) and Gly-tRNA(Ala) via its editing domain. This chain is Alanine--tRNA ligase, found in Photobacterium profundum (strain SS9).